A 106-amino-acid chain; its full sequence is Glutaredoxin-1 (106 aa).

At A2 the chain carries N-acetylalanine. Positions 3–106 (QAFVNSKIQP…TRLQQIGALK (104 aa)) constitute a Glutaredoxin domain. At K9 the chain carries N6-succinyllysine. 2 disulfide bridges follow: C23–C26 and C79–C83.

This sequence belongs to the glutaredoxin family.

The protein localises to the cytoplasm. Functionally, has a glutathione-disulfide oxidoreductase activity in the presence of NADPH and glutathione reductase. Reduces low molecular weight disulfides and proteins. The sequence is that of Glutaredoxin-1 (GLRX) from Sus scrofa (Pig).